Reading from the N-terminus, the 370-residue chain is uncharacterized protein (370 aa).

Positions 152, 154, 184, 215, 306, and 308 each coordinate a divalent metal cation.

Belongs to the metallophosphoesterase superfamily. A divalent metal cation is required as a cofactor.

This is an uncharacterized protein from Helicobacter pylori (strain J99 / ATCC 700824) (Campylobacter pylori J99).